We begin with the raw amino-acid sequence, 920 residues long: DNA ligase (920 aa).

NAD(+) contacts are provided by residues 90-94 (DAAYD), 139-140 (SL), and glutamate 173. Lysine 175 (N6-AMP-lysine intermediate) is an active-site residue. Arginine 196, glutamate 235, lysine 360, and lysine 384 together coordinate NAD(+). Zn(2+)-binding residues include cysteine 481, cysteine 484, cysteine 500, and cysteine 506. The segment at 662 to 691 (GEAAIESAETQGDTASETTGAPTGAEAPLG) is disordered. The span at 669–682 (AETQGDTASETTGA) shows a compositional bias: polar residues. A BRCT domain is found at 839–920 (SLPQTLAGKT…FAQLLATGTI (82 aa)).

It belongs to the NAD-dependent DNA ligase family. LigA subfamily. The cofactor is Mg(2+). Mn(2+) serves as cofactor.

It catalyses the reaction NAD(+) + (deoxyribonucleotide)n-3'-hydroxyl + 5'-phospho-(deoxyribonucleotide)m = (deoxyribonucleotide)n+m + AMP + beta-nicotinamide D-nucleotide.. Its function is as follows. DNA ligase that catalyzes the formation of phosphodiester linkages between 5'-phosphoryl and 3'-hydroxyl groups in double-stranded DNA using NAD as a coenzyme and as the energy source for the reaction. It is essential for DNA replication and repair of damaged DNA. This Bifidobacterium longum (strain DJO10A) protein is DNA ligase.